We begin with the raw amino-acid sequence, 125 residues long: Small ribosomal subunit protein uS11m (125 aa).

This sequence belongs to the universal ribosomal protein uS11 family.

The protein localises to the mitochondrion. The protein is Small ribosomal subunit protein uS11m (RPS11) of Marchantia polymorpha (Common liverwort).